A 410-amino-acid chain; its full sequence is uncharacterized protein (410 aa).

The next 11 helical transmembrane spans lie at 14-34, 48-68, 82-102, 140-160, 164-184, 212-232, 251-271, 279-299, 303-323, 342-362, and 371-391; these read IIIG…FLAI, GLVI…GGYI, IFGW…WVFF, YAAI…FGSS, TPFL…ALQF, YLFT…SQFS, LYGL…FPIV, PLCS…IFTV, VPSI…LFSM, GAIG…GICI, and IYIF…LAFA.

The protein belongs to the major facilitator superfamily. TCR/Tet family.

It is found in the cell membrane. This is an uncharacterized protein from Bacillus subtilis (strain 168).